The following is a 152-amino-acid chain: 3-hydroxyacyl-[acyl-carrier-protein] dehydratase FabZ (152 aa).

Residue His-57 is part of the active site.

Belongs to the thioester dehydratase family. FabZ subfamily.

The protein localises to the cytoplasm. It catalyses the reaction a (3R)-hydroxyacyl-[ACP] = a (2E)-enoyl-[ACP] + H2O. Functionally, involved in unsaturated fatty acids biosynthesis. Catalyzes the dehydration of short chain beta-hydroxyacyl-ACPs and long chain saturated and unsaturated beta-hydroxyacyl-ACPs. This is 3-hydroxyacyl-[acyl-carrier-protein] dehydratase FabZ from Bradyrhizobium sp. (strain BTAi1 / ATCC BAA-1182).